A 978-amino-acid chain; its full sequence is Retinoblastoma-related protein 2 (978 aa).

A domain A region spans residues 385 to 585; sequence TPVTSAMTTA…EKGSSLYNSL (201 aa). A pocket region spans residues 385 to 832; that stretch reads TPVTSAMTTA…NQVFVPTVKP (448 aa). The segment at 586 to 704 is spacer; that stretch reads VVARPSLSTE…PVSGNEKCAV (119 aa). A disordered region spans residues 616–645; sequence QSIHPDGLPPTPSKRWPSAGPDGNCYPQSP. Residues 705 to 832 form a domain B region; sequence VGVQIFFSKI…NQVFVPTVKP (128 aa). Disordered stretches follow at residues 841–878 and 947–978; these read STRPEDKRNTNSQIPGSPKSSPFSNLPDMSPKKVSSSH and VAGSLGQPNGGSASSDPAAAFSPLSKKSKTDS. Over residues 850 to 864 the composition is skewed to polar residues; that stretch reads TNSQIPGSPKSSPFS. A compositionally biased stretch (low complexity) spans 958–971; sequence SASSDPAAAFSPLS.

This sequence belongs to the retinoblastoma protein (RB) family.

The protein localises to the nucleus. Functionally, regulator of biological processes that recruits a histone deacetylase to control gene transcription. May play a role in the entry into mitosis, negatively regulating the cell proliferation. Formation of stable complexes with geminiviridae replication-associated proteins may create a cellular environment which favors viral DNA replication. The protein is Retinoblastoma-related protein 2 (RBR2) of Oryza sativa subsp. japonica (Rice).